The following is a 93-amino-acid chain: Small ribosomal subunit protein uS17 (93 aa).

Belongs to the universal ribosomal protein uS17 family. Part of the 30S ribosomal subunit.

In terms of biological role, one of the primary rRNA binding proteins, it binds specifically to the 5'-end of 16S ribosomal RNA. The protein is Small ribosomal subunit protein uS17 of Bordetella avium (strain 197N).